The following is a 271-amino-acid chain: Enolase-phosphatase E1 (271 aa).

Residues aspartate 18 and glutamate 20 each coordinate Mg(2+). Residues 144-145 and lysine 194 contribute to the substrate site; that span reads SS. Aspartate 221 is a Mg(2+) binding site.

It belongs to the HAD-like hydrolase superfamily. MasA/MtnC family. As to quaternary structure, monomer. Mg(2+) is required as a cofactor.

It is found in the cytoplasm. The protein resides in the nucleus. The catalysed reaction is 5-methylsulfanyl-2,3-dioxopentyl phosphate + H2O = 1,2-dihydroxy-5-(methylsulfanyl)pent-1-en-3-one + phosphate. Its pathway is amino-acid biosynthesis; L-methionine biosynthesis via salvage pathway; L-methionine from S-methyl-5-thio-alpha-D-ribose 1-phosphate: step 3/6. The protein operates within amino-acid biosynthesis; L-methionine biosynthesis via salvage pathway; L-methionine from S-methyl-5-thio-alpha-D-ribose 1-phosphate: step 4/6. Bifunctional enzyme that catalyzes the enolization of 2,3-diketo-5-methylthiopentyl-1-phosphate (DK-MTP-1-P) into the intermediate 2-hydroxy-3-keto-5-methylthiopentenyl-1-phosphate (HK-MTPenyl-1-P), which is then dephosphorylated to form the acireductone 1,2-dihydroxy-3-keto-5-methylthiopentene (DHK-MTPene). The chain is Enolase-phosphatase E1 from Candida albicans (strain WO-1) (Yeast).